The primary structure comprises 260 residues: tRNA pseudouridine synthase A (260 aa).

Asp51 functions as the Nucleophile in the catalytic mechanism. Tyr109 is a substrate binding site.

This sequence belongs to the tRNA pseudouridine synthase TruA family. Homodimer.

It catalyses the reaction uridine(38/39/40) in tRNA = pseudouridine(38/39/40) in tRNA. In terms of biological role, formation of pseudouridine at positions 38, 39 and 40 in the anticodon stem and loop of transfer RNAs. The protein is tRNA pseudouridine synthase A of Albidiferax ferrireducens (strain ATCC BAA-621 / DSM 15236 / T118) (Rhodoferax ferrireducens).